A 213-amino-acid chain; its full sequence is CDP-diacylglycerol--inositol 3-phosphatidyltransferase (213 aa).

Topologically, residues 1–5 (MPEEN) are cytoplasmic. A helical membrane pass occupies residues 6-26 (IFLFVPNLIGYARIVFAIISF). Position 27 (tyrosine 27) is a topological domain, lumenal. Residues 28–48 (FMPCCPFTASSFYLLSGLLDA) traverse the membrane as a helical segment. Mg(2+) is bound by residues aspartate 47 and aspartate 50. Residues 49–73 (FDGHAARALNQGTRFGAMLDMLTDR) are Cytoplasmic-facing. Positions 51, 55, and 61 each coordinate a CDP-1,2-diacyl-sn-glycerol. The Mg(2+) site is built by aspartate 68 and aspartate 72. The active-site Proton acceptor is the aspartate 72. A helical transmembrane segment spans residues 74–94 (CATMCLLVNLALLYPRATLLF). Glutamine 95 is a topological domain (lumenal). Residues 96–116 (LSMSLDVASHWLHLHSSVVRG) form a helical membrane-spanning segment. Residues 117–139 (SESHKMIDLSGNPVLRIYYTSRP) are Cytoplasmic-facing. Residues 140 to 160 (ALFTLCAGNELFYCLLYLFNF) traverse the membrane as a helical segment. Residues 161 to 174 (SEGPLVGSVGLFRM) are Lumenal-facing. The helical transmembrane segment at 175–195 (GLWVTAPIALLKSVISVIHLI) threads the bilayer. The Cytoplasmic portion of the chain corresponds to 196–213 (TAARNMAALDAADRAKKK).

The protein belongs to the CDP-alcohol phosphatidyltransferase class-I family. The cofactor is Mn(2+). Mg(2+) serves as cofactor.

It localises to the endoplasmic reticulum membrane. Its subcellular location is the cell membrane. The enzyme catalyses a CDP-1,2-diacyl-sn-glycerol + myo-inositol = a 1,2-diacyl-sn-glycero-3-phospho-(1D-myo-inositol) + CMP + H(+). In terms of biological role, catalyzes the biosynthesis of phosphatidylinositol (PtdIns) as well as PtdIns:inositol exchange reaction. May thus act to reduce an excessive cellular PtdIns content. The exchange activity is due to the reverse reaction of PtdIns synthase and is dependent on CMP, which is tightly bound to the enzyme. This chain is CDP-diacylglycerol--inositol 3-phosphatidyltransferase, found in Mus musculus (Mouse).